The primary structure comprises 515 residues: Organic cation/carnitine transporter 5 (515 aa).

The Cytoplasmic portion of the chain corresponds to 1-43 (MADSLAPLLPTHIEEDEDTSSPLTFDKILEKSLSDFGFSQFLQ). Residues 44-64 (IVLVGLALTFDSQQIFITVFT) traverse the membrane as a helical segment. Over 65-124 (DAYPTWHCLDHTICNPATTDICKIPRSAWDWDGGFKGKSVISEFDLECSSSFLRSLPSST) the chain is Extracellular. A helical membrane pass occupies residues 125–145 (FYVGSIVGGVVLAMIPDGSLG). The Cytoplasmic portion of the chain corresponds to 146–149 (RKQL). Residues 150–172 (LFFSSFAMSLTGISIFLSSNIWI) traverse the membrane as a helical segment. The Extracellular portion of the chain corresponds to 173–177 (YSFLK). Residues 178–195 (FVIGFARSQTGTYALVLI) form a helical membrane-spanning segment. Position 195–202 (195–202 (ISERISTK)) interacts with ATP. Residues 196 to 208 (SERISTKWRPRAT) are Cytoplasmic-facing. The helical transmembrane segment at 209-229 (MVPFTLFVLGFMSLSGIAYLV) threads the bilayer. Residues 230 to 235 (RHASWK) lie on the Extracellular side of the membrane. Residues 236 to 256 (VLYLCTSIPAGIHSIFIYFFA) traverse the membrane as a helical segment. Over 257 to 320 (LESPRWLHLE…LFIIKWAFRR (64 aa)) the chain is Cytoplasmic. The helical transmembrane segment at 321–341 (VTLVMIIMFGLGMSYYGVPLA) threads the bilayer. Over 342 to 350 (VRDIKVNIY) the chain is Extracellular. A helical membrane pass occupies residues 351 to 371 (MSEALNAMVELPTFVVTPILL). Residues 372 to 379 (EQFSRRSS) are Cytoplasmic-facing. Residues 380–400 (VLVNCLIGGASGVLCFVMSLY) form a helical membrane-spanning segment. Over 401–411 (GRTKIAFALEL) the chain is Extracellular. The helical transmembrane segment at 412 to 432 (GSFFCARIGFNLMAIYLVELF) threads the bilayer. Residues 433-441 (PTCVRNSAT) are Cytoplasmic-facing. A helical transmembrane segment spans residues 442–462 (MMLRQALVVGGACCPLIASLG). At 463-467 (RNVPS) the chain is on the extracellular side. The chain crosses the membrane as a helical span at residues 468-488 (LSFAVFGFAMSGLGLFALLLP). Residues 489–515 (ETKGLSLCDTMEEQEQRDQALKTSHSC) are Cytoplasmic-facing.

The protein belongs to the major facilitator (TC 2.A.1) superfamily. Organic cation transporter (TC 2.A.1.19) family. Mostly expressed in leaves and siliques, and, to a lower extent, in roots, stems and flowers.

The protein resides in the vacuole membrane. High affinity carnitine transporter involved in the active cellular uptake of carnitine. Also transports organic cations. This Arabidopsis thaliana (Mouse-ear cress) protein is Organic cation/carnitine transporter 5 (OCT5).